We begin with the raw amino-acid sequence, 598 residues long: uncharacterized protein (598 aa).

In terms of domain architecture, ABC transmembrane type-1 spans 39 to 322 (LIMVFVFVTV…LSNQFNMIQM (284 aa)). 5 helical membrane-spanning segments follow: residues 40–60 (IMVF…PYLI), 80–100 (MLIL…QGKI), 150–170 (VLGN…GAVI), 177–197 (VILS…TQIV), and 273–293 (LGFA…IITV). Residues 355–589 (IEFKNVWFSY…RGFYYELFTS (235 aa)) enclose the ABC transporter domain. Residue 388–395 (GPTGSGKT) coordinates ATP.

Belongs to the ABC transporter superfamily.

The protein resides in the cell membrane. This is an uncharacterized protein from Thermotoga maritima (strain ATCC 43589 / DSM 3109 / JCM 10099 / NBRC 100826 / MSB8).